The primary structure comprises 397 residues: CCA-adding enzyme (397 aa).

ATP-binding residues include Gly-26 and Arg-29. Residues Gly-26 and Arg-29 each coordinate CTP. Mg(2+) is bound by residues Asp-39 and Asp-41. Residues Arg-110, Asp-153, Arg-156, Arg-159, and Arg-162 each coordinate ATP. CTP contacts are provided by Arg-110, Asp-153, Arg-156, Arg-159, and Arg-162.

Belongs to the tRNA nucleotidyltransferase/poly(A) polymerase family. Bacterial CCA-adding enzyme type 3 subfamily. In terms of assembly, homodimer. The cofactor is Mg(2+).

It carries out the reaction a tRNA precursor + 2 CTP + ATP = a tRNA with a 3' CCA end + 3 diphosphate. The catalysed reaction is a tRNA with a 3' CCA end + 2 CTP + ATP = a tRNA with a 3' CCACCA end + 3 diphosphate. Functionally, catalyzes the addition and repair of the essential 3'-terminal CCA sequence in tRNAs without using a nucleic acid template. Adds these three nucleotides in the order of C, C, and A to the tRNA nucleotide-73, using CTP and ATP as substrates and producing inorganic pyrophosphate. tRNA 3'-terminal CCA addition is required both for tRNA processing and repair. Also involved in tRNA surveillance by mediating tandem CCA addition to generate a CCACCA at the 3' terminus of unstable tRNAs. While stable tRNAs receive only 3'-terminal CCA, unstable tRNAs are marked with CCACCA and rapidly degraded. This Bacillus cytotoxicus (strain DSM 22905 / CIP 110041 / 391-98 / NVH 391-98) protein is CCA-adding enzyme.